Reading from the N-terminus, the 95-residue chain is Cerebratulus toxin A-III (95 aa).

Intrachain disulfides connect C17–C38, C23–C34, and C48–C61.

This sequence belongs to the worm cytolysin family.

It is found in the secreted. Permeabilizes a variety of cells. Forms large pores which allows the release of large proteins almost as rapidly as small organic molecules and inorganic ions. At sublytic concentrations, the toxin also inhibits protein kinase C and endogenous voltage-gated cation selective (sodium, calcium) channels occurring in the nervous and cardiovascular systems. The protein is Cerebratulus toxin A-III of Cerebratulus lacteus (Milky ribbon worm).